The following is a 303-amino-acid chain: UDP-3-O-acyl-N-acetylglucosamine deacetylase (303 aa).

3 residues coordinate Zn(2+): His78, His237, and Asp241. The active-site Proton donor is the His264.

Belongs to the LpxC family. The cofactor is Zn(2+).

The catalysed reaction is a UDP-3-O-[(3R)-3-hydroxyacyl]-N-acetyl-alpha-D-glucosamine + H2O = a UDP-3-O-[(3R)-3-hydroxyacyl]-alpha-D-glucosamine + acetate. It participates in glycolipid biosynthesis; lipid IV(A) biosynthesis; lipid IV(A) from (3R)-3-hydroxytetradecanoyl-[acyl-carrier-protein] and UDP-N-acetyl-alpha-D-glucosamine: step 2/6. Its function is as follows. Catalyzes the hydrolysis of UDP-3-O-myristoyl-N-acetylglucosamine to form UDP-3-O-myristoylglucosamine and acetate, the committed step in lipid A biosynthesis. In Pseudomonas putida (strain GB-1), this protein is UDP-3-O-acyl-N-acetylglucosamine deacetylase.